Reading from the N-terminus, the 345-residue chain is Nuclear distribution protein nudE-like 1 (345 aa).

Residues 27–190 (KQTFQEARDE…LAVRERQQEV (164 aa)) adopt a coiled-coil conformation. A self-association region spans residues 56–166 (VQAEQRNRDL…LDEKESLLVS (111 aa)). The tract at residues 64–189 (DLQADNQRLK…ELAVRERQQE (126 aa)) is interaction with KATNB1. The interval 114 to 133 (YVRELEQANDDLERAKRATI) is required for interaction with PAFAH1B1. The interval 175–345 (RDLRQELAVR…SAPGMLPLSV (171 aa)) is interaction with CENPF. Residues 189–256 (EVTRKSAPSS…SARISALNIV (68 aa)) form an interaction with YWHAE region. The interval 191–345 (TRKSAPSSPT…SAPGMLPLSV (155 aa)) is interaction with NEFL. Residues 195-256 (APSSPTLDCE…SARISALNIV (62 aa)) are interaction with KATNA1. A Phosphoserine modification is found at Ser-215. Positions 217 to 240 (PATPVGKGTENSFPSPKAIPNGFG) are disordered. Thr-219 carries the post-translational modification Phosphothreonine; by CDK1 and MAPK1. Positions 227-278 (NSFPSPKAIPNGFGTSPLTPSARISALNIVGDLLRKVGALESKLAACRNFAK) are interaction with DISC1. Ser-231 carries the post-translational modification Phosphoserine. Phosphoserine; by CDK1 is present on Ser-242. The residue at position 245 (Thr-245) is a Phosphothreonine; by CDK1 and MAPK1. The segment at 256–291 (VGDLLRKVGALESKLAACRNFAKDQASRKSYISGNV) is required for localization to the centrosome and interaction with dynein, dynactin, tubulin gamma, PCM1 and PCNT. Cys-273 carries S-palmitoyl cysteine; by ZDHHC2, ZDHHC3 and ZDHHC7 lipidation. The tract at residues 316–345 (AVNGFDPAPPPPGLGSSRPLSAPGMLPLSV) is disordered. Residues 329–339 (LGSSRPLSAPG) are compositionally biased toward low complexity. At Ser-344 the chain carries Phosphoserine.

This sequence belongs to the nudE family. As to quaternary structure, self-associates. Interacts with DISC1, dynein, dynactin, tubulin gamma, KATNA1, KATNB1, microtubules, PAFAH1B1, PCM1, PCNT, and YWHAE. Interacts directly with NEFL and indirectly with NEFH. Interacts (via C-terminus) with CENPF. Interacts with ZNF365. Interacts with PLEKHM1 (via N- and C-terminus). Interacts with GTP-bound RAB9A; the interaction may lead to RAB9A-dynein motor tethering. In terms of processing, phosphorylated in mitosis. Can be phosphorylated by CDK1, CDK5 and MAPK1. Phosphorylation by CDK5 promotes interaction with KATNA1 and YWHAE. Palmitoylation at Cys-273 reduces affinity for dynein. In terms of tissue distribution, expressed at low levels in heart, hypothalamus, liver, lung, spleen and stomach. Expressed at higher levels in testis and brain. Within the brain, expressed in cerebellum, cerebral stem, cortex and striatum.

Its subcellular location is the cytoplasm. It localises to the cytoskeleton. The protein localises to the microtubule organizing center. The protein resides in the centrosome. It is found in the chromosome. Its subcellular location is the centromere. It localises to the kinetochore. The protein localises to the spindle. Required for organization of the cellular microtubule array and microtubule anchoring at the centrosome. May regulate microtubule organization at least in part by targeting the microtubule severing protein KATNA1 to the centrosome. Also positively regulates the activity of the minus-end directed microtubule motor protein dynein. May enhance dynein-mediated microtubule sliding by targeting dynein to the microtubule plus ends. Required for several dynein- and microtubule-dependent processes such as the maintenance of Golgi integrity, the centripetal motion of secretory vesicles and the coupling of the nucleus and centrosome. Also required during brain development for the migration of newly formed neurons from the ventricular/subventricular zone toward the cortical plate. Plays a role, together with DISC1, in the regulation of neurite outgrowth. Required for mitosis in some cell types but appears to be dispensible for mitosis in cortical neuronal progenitors, which instead requires NDE1. Facilitates the polymerization of neurofilaments from the individual subunits NEFH and NEFL. Positively regulates lysosome peripheral distribution and ruffled border formation in osteoclasts. Plays a role, together with DISC1, in the regulation of neurite outgrowth. May act as a RAB9A/B effector that tethers RAB9-associated late endosomes to the dynein motor for their retrograde transport to the trans-Golgi network. This Oryctolagus cuniculus (Rabbit) protein is Nuclear distribution protein nudE-like 1 (NDEL1).